Reading from the N-terminus, the 188-residue chain is Ribose 1,5-bisphosphate phosphokinase PhnN (188 aa).

It belongs to the ribose 1,5-bisphosphokinase family.

The catalysed reaction is alpha-D-ribose 1,5-bisphosphate + ATP = 5-phospho-alpha-D-ribose 1-diphosphate + ADP. It functions in the pathway metabolic intermediate biosynthesis; 5-phospho-alpha-D-ribose 1-diphosphate biosynthesis; 5-phospho-alpha-D-ribose 1-diphosphate from D-ribose 5-phosphate (route II): step 3/3. Its function is as follows. Catalyzes the phosphorylation of ribose 1,5-bisphosphate to 5-phospho-D-ribosyl alpha-1-diphosphate (PRPP). The sequence is that of Ribose 1,5-bisphosphate phosphokinase PhnN from Dickeya zeae (strain Ech586) (Dickeya dadantii (strain Ech586)).